Consider the following 468-residue polypeptide: Soluble pyridine nucleotide transhydrogenase (468 aa).

36-45 (ERYKNVGGGC) contributes to the FAD binding site.

It belongs to the class-I pyridine nucleotide-disulfide oxidoreductase family. FAD is required as a cofactor.

The protein resides in the cytoplasm. The catalysed reaction is NAD(+) + NADPH = NADH + NADP(+). Conversion of NADPH, generated by peripheral catabolic pathways, to NADH, which can enter the respiratory chain for energy generation. The polypeptide is Soluble pyridine nucleotide transhydrogenase (Hamiltonella defensa subsp. Acyrthosiphon pisum (strain 5AT)).